A 252-amino-acid polypeptide reads, in one-letter code: tRNA uridine(34) hydroxylase (252 aa).

The Rhodanese domain occupies 129–223 (QGRPVVMLDT…YFEETGGKGF (95 aa)). The Cysteine persulfide intermediate role is filled by cysteine 183.

Belongs to the TrhO family.

It carries out the reaction uridine(34) in tRNA + AH2 + O2 = 5-hydroxyuridine(34) in tRNA + A + H2O. Its function is as follows. Catalyzes oxygen-dependent 5-hydroxyuridine (ho5U) modification at position 34 in tRNAs. The polypeptide is tRNA uridine(34) hydroxylase (Bordetella petrii (strain ATCC BAA-461 / DSM 12804 / CCUG 43448)).